A 633-amino-acid chain; its full sequence is Probable potassium transport system protein Kup 2 (633 aa).

A run of 11 helical transmembrane segments spans residues 59-79, 110-130, 145-165, 173-193, 219-239, 256-276, 287-307, 345-365, 374-394, 402-422, and 429-449; these read ISAI…ILIM, ILLV…LTPA, TALQ…LFLF, IGAL…AAGI, GFAS…AEAL, FGLV…LIIV, LLYP…ATVI, IYIP…VLGF, AYGV…FFVI, LLLS…FVSS, and EGGW…LTWV.

The protein belongs to the HAK/KUP transporter (TC 2.A.72) family.

It localises to the cell inner membrane. It catalyses the reaction K(+)(in) + H(+)(in) = K(+)(out) + H(+)(out). Functionally, transport of potassium into the cell. Likely operates as a K(+):H(+) symporter. This is Probable potassium transport system protein Kup 2 from Cupriavidus necator (strain ATCC 17699 / DSM 428 / KCTC 22496 / NCIMB 10442 / H16 / Stanier 337) (Ralstonia eutropha).